A 309-amino-acid polypeptide reads, in one-letter code: Short-chain dehydrogenase/reductase ARMGADRAFT_1048226 (309 aa).

Positions 64, 86, 113, and 145 each coordinate NADP(+). The Proton donor role is filled by Ser167. The NADP(+) site is built by Tyr196 and Lys200. Tyr196 acts as the Proton acceptor in catalysis. The active-site Lowers pKa of active site Tyr is Lys200.

Belongs to the short-chain dehydrogenases/reductases (SDR) family.

Its pathway is secondary metabolite biosynthesis. Its function is as follows. Short-chain dehydrogenase/reductase, part of the gene cluster that mediates the biosynthesis of melleolides, a range of antifungal and phytotoxic polyketide derivatives composed of an orsellinic acid (OA) moiety esterified to various sesquiterpene alcohols. The first step in melleolides biosynthesis is performed by the delta(6)-protoilludene synthase PRO1 which catalyzes the cyclization of farnesyl diphosphate to protoilludene. The orsellinic acid synthase armB produces OA by condensing acetyl-CoA with 3 malonyl-CoA units in a three-round chain elongation reaction folowed by a C2-C7 ring closure. ArmB further catalyzes the trans-esterification of OA to the various sesquiterpene alcohols resulting from the hydroxylation of protoilludene. The melleolides cluster also includes 5 cytochrome P450 monooxygenases, 4 NAD(+)-dependent oxidoreductases, one flavin-dependent oxidoreductase, and one O-methyltransferase. The cytochrome P450 monooxygenases may be involved in protoilludene hydroxylation to elaborate melleolides with multiple alcohol groups, such as melleolide D, which carries alcohol functionalities at C-4, C-5, C-10, and C-13. The role of the NAD(+)-dependent enzymes remains unknown. Numerous melleolides, including arnamial, show 5'-O-methylation of the aromatic moiety which may be catalyzed by the methyltransferase encoded in the cluster. The flavin-dependent oxidoreductase might represent the dehydrogenase yielding the aldehyde in position 1 of arnamial and other melleolides. Finally, several halogenase localized outside of the cluster, are able to catalyze the transfer of a single chlorine atom to the melleolide backbone, resulting in a 6'-chloromelleolide product. This chain is Short-chain dehydrogenase/reductase ARMGADRAFT_1048226, found in Armillaria gallica (Bulbous honey fungus).